A 243-amino-acid chain; its full sequence is NH(3)-dependent NAD(+) synthetase (243 aa).

Residue Gly-31 to Ser-38 coordinates ATP. Asp-37 provides a ligand contact to Mg(2+). Arg-116 lines the deamido-NAD(+) pocket. Thr-136 lines the ATP pocket. Glu-141 is a Mg(2+) binding site. Residues Lys-149 and Asp-156 each contribute to the deamido-NAD(+) site. ATP is bound by residues Lys-165 and Ser-187. His-233–Lys-234 is a deamido-NAD(+) binding site.

The protein belongs to the NAD synthetase family. In terms of assembly, homodimer.

The catalysed reaction is deamido-NAD(+) + NH4(+) + ATP = AMP + diphosphate + NAD(+) + H(+). The protein operates within cofactor biosynthesis; NAD(+) biosynthesis; NAD(+) from deamido-NAD(+) (ammonia route): step 1/1. Functionally, catalyzes the ATP-dependent amidation of deamido-NAD to form NAD. Uses ammonia as a nitrogen source. The polypeptide is NH(3)-dependent NAD(+) synthetase (Carboxydothermus hydrogenoformans (strain ATCC BAA-161 / DSM 6008 / Z-2901)).